A 306-amino-acid polypeptide reads, in one-letter code: ClpXP adapter protein SpxH (306 aa).

It belongs to the SpxH family. Interacts with Spx.

The protein resides in the cytoplasm. In terms of biological role, adapter protein required for efficient degradation of Spx by ClpXP under non-stress conditions. Interaction with Spx stabilizes Spx and exposes the C-terminus of Spx for recognition and proteolysis by ClpXP. This chain is ClpXP adapter protein SpxH, found in Halalkalibacterium halodurans (strain ATCC BAA-125 / DSM 18197 / FERM 7344 / JCM 9153 / C-125) (Bacillus halodurans).